The primary structure comprises 416 residues: 26S proteasome regulatory subunit 8 (416 aa).

Positions methionine 1–alanine 18 are enriched in low complexity. Residues methionine 1–threonine 29 are disordered. Glycine 200–threonine 207 is an ATP binding site.

It belongs to the AAA ATPase family. In terms of assembly, component of the 19S proteasome regulatory particle complex. The 26S proteasome consists of a 20S core particle (CP) and two 19S regulatory subunits (RP). Interacts with elt-2.

It is found in the cytoplasm. Its subcellular location is the nucleus. Component of the 26S proteasome, a multiprotein complex involved in the ATP-dependent degradation of ubiquitinated proteins. This complex plays a key role in the maintenance of protein homeostasis by removing misfolded or damaged proteins, which could impair cellular functions, and by removing proteins whose functions are no longer required. Therefore, the proteasome participates in numerous cellular processes, including cell cycle progression, apoptosis, or DNA damage repair. Belongs to the heterohexameric ring of AAA (ATPases associated with diverse cellular activities) proteins that unfolds ubiquitinated target proteins that are concurrently translocated into a proteolytic chamber and degraded into peptides. In addition, regulates gene expression in response to bacterial infection. Binds to the GATA transcription factor elt-2 to control its transcriptional activity and thus the expression of elt-2-dependent genes in response to infection by Gram-negative bacteria such as P.aeruginosa. The polypeptide is 26S proteasome regulatory subunit 8 (Caenorhabditis elegans).